Consider the following 229-residue polypeptide: Demethylmenaquinone methyltransferase (229 aa).

Residues Thr57, Asp77, and 101–102 each bind S-adenosyl-L-methionine; that span reads DV.

Belongs to the class I-like SAM-binding methyltransferase superfamily. MenG/UbiE family.

The catalysed reaction is a 2-demethylmenaquinol + S-adenosyl-L-methionine = a menaquinol + S-adenosyl-L-homocysteine + H(+). It functions in the pathway quinol/quinone metabolism; menaquinone biosynthesis; menaquinol from 1,4-dihydroxy-2-naphthoate: step 2/2. Functionally, methyltransferase required for the conversion of demethylmenaquinol (DMKH2) to menaquinol (MKH2). The sequence is that of Demethylmenaquinone methyltransferase from Chlamydia muridarum (strain MoPn / Nigg).